The sequence spans 358 residues: ATP-dependent (S)-NAD(P)H-hydrate dehydratase (358 aa).

A YjeF C-terminal domain is found at 63–354 (LLQSAKNVIP…QQIHQAFEEL (292 aa)). (6S)-NADPHX-binding positions include Gly-163 and 220 to 226 (NVVEFDR). ATP contacts are provided by residues 261–265 (KGQHD) and 280–289 (GSNRRCGGQG). Asp-290 is a (6S)-NADPHX binding site.

Belongs to the NnrD/CARKD family. The cofactor is Mg(2+).

It catalyses the reaction (6S)-NADHX + ATP = ADP + phosphate + NADH + H(+). It carries out the reaction (6S)-NADPHX + ATP = ADP + phosphate + NADPH + H(+). Functionally, catalyzes the dehydration of the S-form of NAD(P)HX at the expense of ATP, which is converted to ADP. Together with NAD(P)HX epimerase, which catalyzes the epimerization of the S- and R-forms, the enzyme allows the repair of both epimers of NAD(P)HX, a damaged form of NAD(P)H that is a result of enzymatic or heat-dependent hydration. In Nematostella vectensis (Starlet sea anemone), this protein is ATP-dependent (S)-NAD(P)H-hydrate dehydratase.